A 68-amino-acid chain; its full sequence is DNA-directed RNA polymerase subunit omega (68 aa).

Belongs to the RNA polymerase subunit omega family. In terms of assembly, the RNAP catalytic core consists of 2 alpha, 1 beta, 1 beta' and 1 omega subunit. When a sigma factor is associated with the core the holoenzyme is formed, which can initiate transcription.

It carries out the reaction RNA(n) + a ribonucleoside 5'-triphosphate = RNA(n+1) + diphosphate. Its function is as follows. Promotes RNA polymerase assembly. Latches the N- and C-terminal regions of the beta' subunit thereby facilitating its interaction with the beta and alpha subunits. This Dechloromonas aromatica (strain RCB) protein is DNA-directed RNA polymerase subunit omega.